We begin with the raw amino-acid sequence, 558 residues long: Protein NRT1/ PTR FAMILY 2.7 (558 aa).

12 helical membrane-spanning segments follow: residues 31–51 (FMIA…LNLI), 63–83 (IAAA…PAVA), 90–110 (FFGT…GVAL), 140–162 (LGVL…FTLA), 178–198 (FFNW…TAIV), 204–224 (ISWT…FLVF), 319–339 (IIPL…QLSL), 357–377 (IPAG…IIVN), 399–419 (VGIG…VEAK), 440–460 (VLWL…HFPG), 479–499 (SITS…IDLI), and 518–538 (VYWI…VCSW).

Belongs to the major facilitator superfamily. Proton-dependent oligopeptide transporter (POT/PTR) (TC 2.A.17) family. Expressed in shoots and in the cortex of mature roots. Not expressed in root tip meristematic cells.

It is found in the cell membrane. Its function is as follows. Transporter involved in a passive nitrate efflux. Not competent for chloride transport. In Arabidopsis thaliana (Mouse-ear cress), this protein is Protein NRT1/ PTR FAMILY 2.7 (NPF2.7).